A 69-amino-acid chain; its full sequence is Large ribosomal subunit protein bL31 (69 aa).

4 residues coordinate Zn(2+): cysteine 16, cysteine 18, cysteine 38, and cysteine 41.

This sequence belongs to the bacterial ribosomal protein bL31 family. Type A subfamily. Part of the 50S ribosomal subunit. It depends on Zn(2+) as a cofactor.

Its function is as follows. Binds the 23S rRNA. The protein is Large ribosomal subunit protein bL31 of Cutibacterium acnes (strain DSM 16379 / KPA171202) (Propionibacterium acnes).